Here is a 963-residue protein sequence, read N- to C-terminus: Collagen alpha-1(I) chain (963 aa).

Residues 1 to 963 (GPMGPSGPRG…PGPPGPPGPP (963 aa)) form a disordered region. Positions 40–54 (NGDDGEAGKPGRPGE) are enriched in basic and acidic residues. Ser82 carries the phosphoserine modification. Low complexity-rich tracts occupy residues 90–106 (DAGPAGPKGEPGSPGEN) and 129–142 (PAGARGNDGATGAA). The span at 144 to 156 (PPGPTGPAGPPGF) shows a compositional bias: pro residues. Over residues 190 to 229 (AGAAGPAGNPGADGQPGAKGANGAPGIAGAPGFPGARGPS) the composition is skewed to low complexity. Gly residues predominate over residues 296 to 305 (GERGGPGARG). Low complexity-rich tracts occupy residues 313–337 (AGPKGPAGERGAPGPAGPKGSPGEA), 349–375 (KGITGSPGSPGPDGKTGPPGPAGQDGR), 384–403 (ARGQAGVMGFPGPKGAAGEP), 482–495 (PRGANGAPGNDGAK), 555–569 (SGPSGPAGPTGARGA), and 582–609 (AGFAGPPGADGQPGAKGEPGDAGAKGDA). Ser558 bears the Phosphoserine mark. Positions 611–623 (PPGPAGPTGPPGP) are enriched in pro residues. Composition is skewed to low complexity over residues 638-654 (SAGPPGATGFPGAAGRV), 683-692 (ETGPAGRPGE), and 702-726 (AGEKGSPGADGPAGAPGTPGPQGIA). Pro residues-rich tracts occupy residues 767–777 (PPGPVGPPGIA) and 813–828 (AGPPGAPGAPGAPGPV). Residues 849 to 863 (IGPVGARGPAGPQGP) are compositionally biased toward low complexity. The span at 864–878 (RGDKGETGEQGDRGI) shows a compositional bias: basic and acidic residues. Residues 897-930 (PGEQGPSGASGPAGPRGPPGSAGAPGKDGINGIP) are compositionally biased toward low complexity. Residues 948 to 963 (VGPPGPPGPPGPPGPP) show a composition bias toward pro residues.

This sequence belongs to the fibrillar collagen family. In terms of assembly, trimers of one alpha 2(I) and two alpha 1(I) chains. Prolines at the third position of the tripeptide repeating unit (G-X-Y) are hydroxylated in some or all of the chains. Forms the fibrils of tendon, ligaments and bones. In bones, the fibrils are mineralized with calcium hydroxyapatite.

It localises to the secreted. It is found in the extracellular space. The protein resides in the extracellular matrix. Functionally, type I collagen is a member of group I collagen (fibrillar forming collagen). The polypeptide is Collagen alpha-1(I) chain (Tapirus terrestris (Lowland tapir)).